We begin with the raw amino-acid sequence, 296 residues long: Cytidine deaminase (296 aa).

2 CMP/dCMP-type deaminase domains span residues 48–168 (DADA…FGPV) and 187–296 (QNMN…FIEE). Residue 89–91 (NME) participates in substrate binding. Histidine 102 lines the Zn(2+) pocket. Catalysis depends on glutamate 104, which acts as the Proton donor. Zn(2+) is bound by residues cysteine 129 and cysteine 132.

Belongs to the cytidine and deoxycytidylate deaminase family. In terms of assembly, homodimer. Zn(2+) is required as a cofactor.

It carries out the reaction cytidine + H2O + H(+) = uridine + NH4(+). The enzyme catalyses 2'-deoxycytidine + H2O + H(+) = 2'-deoxyuridine + NH4(+). Functionally, this enzyme scavenges exogenous and endogenous cytidine and 2'-deoxycytidine for UMP synthesis. This is Cytidine deaminase from Pectobacterium carotovorum subsp. carotovorum (strain PC1).